The primary structure comprises 594 residues: Glutamate decarboxylase 1 (594 aa).

Low complexity predominate over residues 1–13 (MASSTPSSSATSS). A disordered region spans residues 1–23 (MASSTPSSSATSSNAGADPNTTN). At serine 78 the chain carries Phosphoserine. 190-192 (QLS) is a binding site for 4-aminobutanoate. Lysine 405 is subject to N6-(pyridoxal phosphate)lysine. Arginine 567 is a binding site for 4-aminobutanoate.

Belongs to the group II decarboxylase family. In terms of assembly, homodimer. Pyridoxal 5'-phosphate serves as cofactor.

It catalyses the reaction L-glutamate + H(+) = 4-aminobutanoate + CO2. Its function is as follows. Catalyzes the synthesis of the inhibitory neurotransmitter gamma-aminobutyric acid (GABA) with pyridoxal 5'-phosphate as cofactor. This is Glutamate decarboxylase 1 (GAD1) from Felis catus (Cat).